A 586-amino-acid chain; its full sequence is Kelch-like protein 7 (586 aa).

The 68-residue stretch at 44 to 111 folds into the BTB domain; that stretch reads CDVILMVQER…AYTARISVNS (68 aa). Positions 146-248 constitute a BACK domain; the sequence is CLGISVLAEC…SKNFLSKTVQ (103 aa). 6 Kelch repeats span residues 294-336, 337-382, 383-430, 431-481, 483-528, and 530-575; these read RIAL…FWDN, VVYI…AAEG, KIYT…EANG, LIYV…FVKD, IFAV…AVGS, and VYVL…CVVD.

In terms of assembly, homodimer. Component of the BCR(KLHL7) E3 ubiquitin ligase complex, at least composed of CUL3 and KLHL7 and RBX1. As to expression, widely expressed, with highest levels in adult and fetal heart, CNS and adult testis.

It is found in the nucleus. It localises to the cytoplasm. The protein operates within protein modification; protein ubiquitination. Functionally, substrate-specific adapter of a BCR (BTB-CUL3-RBX1) E3 ubiquitin ligase complex. The BCR(KLHL7) complex acts by mediating ubiquitination and subsequent degradation of substrate proteins. Probably mediates 'Lys-48'-linked ubiquitination. The polypeptide is Kelch-like protein 7 (KLHL7) (Homo sapiens (Human)).